A 235-amino-acid chain; its full sequence is Uridylate kinase (235 aa).

An ATP-binding site is contributed by 9 to 12 (KLSG). Gly-51 serves as a coordination point for UMP. The ATP site is built by Gly-52 and Arg-56. UMP is bound by residues Asp-71 and 132–139 (TGNPYFTT). ATP is bound by residues Thr-159, Tyr-165, and Asp-168.

Belongs to the UMP kinase family. Homohexamer.

The protein resides in the cytoplasm. It catalyses the reaction UMP + ATP = UDP + ADP. The protein operates within pyrimidine metabolism; CTP biosynthesis via de novo pathway; UDP from UMP (UMPK route): step 1/1. Its activity is regulated as follows. Inhibited by UTP. In terms of biological role, catalyzes the reversible phosphorylation of UMP to UDP. The chain is Uridylate kinase from Flavobacterium psychrophilum (strain ATCC 49511 / DSM 21280 / CIP 103535 / JIP02/86).